Consider the following 452-residue polypeptide: GTPase Obg (452 aa).

The Obg domain occupies 1 to 158 (MFIDRAKIYV…KWIVLELKVM (158 aa)). Disordered stretches follow at residues 66-87 (GKRG…DKVI) and 117-143 (AEGG…SEDG). Residues 159-338 (AEVGLIGYPN…LLDFVAEKVA (180 aa)) form the OBG-type G domain. GTP-binding positions include 165 to 172 (GYPNVGKS), 190 to 194 (FTTLN), 212 to 215 (DIPG), 282 to 285 (NKMD), and 319 to 321 (SAA). Residues serine 172 and threonine 192 each coordinate Mg(2+). Residues 376–452 (IEEKPKSDFG…KIGNVEFEYQ (77 aa)) enclose the OCT domain.

The protein belongs to the TRAFAC class OBG-HflX-like GTPase superfamily. OBG GTPase family. Monomer. Requires Mg(2+) as cofactor.

Its subcellular location is the cytoplasm. In terms of biological role, an essential GTPase which binds GTP, GDP and possibly (p)ppGpp with moderate affinity, with high nucleotide exchange rates and a fairly low GTP hydrolysis rate. Plays a role in control of the cell cycle, stress response, ribosome biogenesis and in those bacteria that undergo differentiation, in morphogenesis control. This Natranaerobius thermophilus (strain ATCC BAA-1301 / DSM 18059 / JW/NM-WN-LF) protein is GTPase Obg.